A 314-amino-acid chain; its full sequence is MTIEIPAHMHPSRSFQGLILTLHNYWAAYGCVILQPYDMEVGAGTFHPATTLRALGPKRWNAAYVQPSRRPKDGRYGENPNRLQHYYQYQVILKPNPPNLQELYLGSLAAIGVDPLLHDIRFVEDDWESPTLGAWGLGWECWCDGMEVSQFTYFQQVCGIECAPVAGELTYGLERLAMYVQGVDNVYDLNFNGREGADKVTYGDVFLQAEQEYSRHNFEYADTAMLLRHFEDAEAECKALLDAGAPASNDNLPMHKMVFPAYDQCIKASHVFNLLDARGVISVTERQSYILRVRNLAKACGEAFLKTQAGGLAA.

It belongs to the class-II aminoacyl-tRNA synthetase family. Tetramer of two alpha and two beta subunits.

Its subcellular location is the cytoplasm. It carries out the reaction tRNA(Gly) + glycine + ATP = glycyl-tRNA(Gly) + AMP + diphosphate. This is Glycine--tRNA ligase alpha subunit from Mesorhizobium japonicum (strain LMG 29417 / CECT 9101 / MAFF 303099) (Mesorhizobium loti (strain MAFF 303099)).